Reading from the N-terminus, the 38-residue chain is Photosystem II reaction center protein M (38 aa).

Residues 7 to 27 traverse the membrane as a helical segment; the sequence is GFVASILFVLVPTVFLLILYI.

The protein belongs to the PsbM family. As to quaternary structure, PSII is composed of 1 copy each of membrane proteins PsbA, PsbB, PsbC, PsbD, PsbE, PsbF, PsbH, PsbI, PsbJ, PsbK, PsbL, PsbM, PsbT, PsbX, PsbY, PsbZ, Psb30/Ycf12, peripheral proteins PsbO, CyanoQ (PsbQ), PsbU, PsbV and a large number of cofactors. It forms dimeric complexes.

The protein resides in the cellular thylakoid membrane. Its function is as follows. One of the components of the core complex of photosystem II (PSII). PSII is a light-driven water:plastoquinone oxidoreductase that uses light energy to abstract electrons from H(2)O, generating O(2) and a proton gradient subsequently used for ATP formation. It consists of a core antenna complex that captures photons, and an electron transfer chain that converts photonic excitation into a charge separation. This subunit is found at the monomer-monomer interface. The polypeptide is Photosystem II reaction center protein M (Nostoc punctiforme (strain ATCC 29133 / PCC 73102)).